A 680-amino-acid polypeptide reads, in one-letter code: Protein terminal ear1 homolog (680 aa).

In terms of domain architecture, RRM spans 223-295 (SLVVLNSLPA…RRLVVEYTRP (73 aa)). Disordered regions lie at residues 294-415 (RPSL…SWRG) and 593-680 (TEPV…GYTD). Composition is skewed to low complexity over residues 328–340 (PSQS…SGSG) and 379–403 (SAAA…KQSQ). Positions 404 to 413 (KGGGGRGGSW) are enriched in gly residues. Low complexity-rich tracts occupy residues 602–621 (SPAP…CAAS) and 634–648 (SSSG…SSNA). Residues 656–666 (HGETGGDRGDD) show a composition bias toward basic and acidic residues.

Highly expressed in shoot apex and inflorescence apex, at intermediate levels in roots and at low levels in leaf blade and leaf sheath.

Its function is as follows. Probable RNA-binding protein. Involved in the regular timing (plastochron) of lateral organs formation. May regulate the rate of leaf initiation and the duration of vegetative phase. Seems to be redundant to the function of PLASTOCHRON1, but to act in an independent pathway. The chain is Protein terminal ear1 homolog (PLA2) from Oryza sativa subsp. indica (Rice).